A 247-amino-acid chain; its full sequence is Chymase (247 aa).

Residues 1 to 19 form the signal peptide; it reads MLLLPLPLLLFFLCSRAEA. Positions 20-21 are cleaved as a propeptide — activation peptide; sequence GE. Residues 22–245 enclose the Peptidase S1 domain; it reads IIGGTECKPH…YRPWINKILQ (224 aa). Cys51 and Cys67 form a disulfide bridge. The Charge relay system role is filled by His66. N-linked (GlcNAc...) asparagine glycans are attached at residues Asn80 and Asn103. Residue Asp110 is the Charge relay system of the active site. 2 disulfides stabilise this stretch: Cys144–Cys209 and Cys175–Cys188. Ser203 serves as the catalytic Charge relay system.

This sequence belongs to the peptidase S1 family. Granzyme subfamily.

The protein localises to the secreted. Its subcellular location is the cytoplasmic granule. The enzyme catalyses Preferential cleavage: Phe-|-Xaa &gt; Tyr-|-Xaa &gt; Trp-|-Xaa &gt; Leu-|-Xaa.. Major secreted protease of mast cells with suspected roles in vasoactive peptide generation, extracellular matrix degradation, and regulation of gland secretion. The protein is Chymase (CMA1) of Macaca fascicularis (Crab-eating macaque).